A 574-amino-acid polypeptide reads, in one-letter code: Thiol:disulfide interchange protein DsbD (574 aa).

The signal sequence occupies residues 1-19; the sequence is MAHRILTLILLFCSAHASA. A disulfide bond links Cys-122 and Cys-128. The disordered stretch occupies residues 147 to 169; that stretch reads VKANAATPSAATGEQTRVNSDSP. Residues 152 to 169 are compositionally biased toward polar residues; it reads ATPSAATGEQTRVNSDSP. Transmembrane regions (helical) follow at residues 173–193, 218–238, 253–273, 306–326, 333–353, 367–387, and 399–419; these read LPFS…TPCV, LLAF…GLVV, WVLV…FGLF, IAGL…LLYI, WLGG…LILV, WMEQ…VFLL, and LWSV…LNAT. Cysteines 192 and 314 form a disulfide. Residues 430–574 form the Thioredoxin domain; it reads LLGAAMICAR…FATHLHNRLR (145 aa). Cys-489 and Cys-492 are joined by a disulfide.

Belongs to the thioredoxin family. DsbD subfamily.

Its subcellular location is the cell inner membrane. It carries out the reaction [protein]-dithiol + NAD(+) = [protein]-disulfide + NADH + H(+). The enzyme catalyses [protein]-dithiol + NADP(+) = [protein]-disulfide + NADPH + H(+). Its function is as follows. Required to facilitate the formation of correct disulfide bonds in some periplasmic proteins and for the assembly of the periplasmic c-type cytochromes. Acts by transferring electrons from cytoplasmic thioredoxin to the periplasm. This transfer involves a cascade of disulfide bond formation and reduction steps. The polypeptide is Thiol:disulfide interchange protein DsbD (Cronobacter sakazakii (strain ATCC BAA-894) (Enterobacter sakazakii)).